Here is a 127-residue protein sequence, read N- to C-terminus: Phosphoribosyl-ATP pyrophosphatase (127 aa).

Belongs to the PRA-PH family.

Its subcellular location is the cytoplasm. It catalyses the reaction 1-(5-phospho-beta-D-ribosyl)-ATP + H2O = 1-(5-phospho-beta-D-ribosyl)-5'-AMP + diphosphate + H(+). It functions in the pathway amino-acid biosynthesis; L-histidine biosynthesis; L-histidine from 5-phospho-alpha-D-ribose 1-diphosphate: step 2/9. The sequence is that of Phosphoribosyl-ATP pyrophosphatase from Polaromonas sp. (strain JS666 / ATCC BAA-500).